A 159-amino-acid chain; its full sequence is Cytochrome c-type biogenesis protein CcmE (159 aa).

At 1-23 (MSSQSFHNSPSLRVILKQRKKKR) the chain is on the cytoplasmic side. The helical; Signal-anchor for type II membrane protein transmembrane segment at 24-44 (LLIVLFCCLIIAIATSLITYA) threads the bilayer. Over 45–159 (LRNTVSFFRM…RLNKHHRVEK (115 aa)) the chain is Periplasmic. 2 residues coordinate heme: H138 and Y142.

This sequence belongs to the CcmE/CycJ family.

Its subcellular location is the cell inner membrane. In terms of biological role, heme chaperone required for the biogenesis of c-type cytochromes. Transiently binds heme delivered by CcmC and transfers the heme to apo-cytochromes in a process facilitated by CcmF and CcmH. This is Cytochrome c-type biogenesis protein CcmE from Bartonella henselae (strain ATCC 49882 / DSM 28221 / CCUG 30454 / Houston 1) (Rochalimaea henselae).